A 631-amino-acid chain; its full sequence is 1-deoxy-D-xylulose-5-phosphate synthase (631 aa).

Thiamine diphosphate-binding positions include histidine 87 and 128–130 (GHS). Position 159 (aspartate 159) interacts with Mg(2+). Residues 160 to 161 (GA), asparagine 188, phenylalanine 295, and glutamate 377 contribute to the thiamine diphosphate site. Mg(2+) is bound at residue asparagine 188.

It belongs to the transketolase family. DXPS subfamily. In terms of assembly, homodimer. Mg(2+) is required as a cofactor. Thiamine diphosphate serves as cofactor.

The enzyme catalyses D-glyceraldehyde 3-phosphate + pyruvate + H(+) = 1-deoxy-D-xylulose 5-phosphate + CO2. The protein operates within metabolic intermediate biosynthesis; 1-deoxy-D-xylulose 5-phosphate biosynthesis; 1-deoxy-D-xylulose 5-phosphate from D-glyceraldehyde 3-phosphate and pyruvate: step 1/1. Its function is as follows. Catalyzes the acyloin condensation reaction between C atoms 2 and 3 of pyruvate and glyceraldehyde 3-phosphate to yield 1-deoxy-D-xylulose-5-phosphate (DXP). This chain is 1-deoxy-D-xylulose-5-phosphate synthase, found in Pseudomonas entomophila (strain L48).